The chain runs to 503 residues: 3-octaprenyl-4-hydroxybenzoate carboxy-lyase (503 aa).

Residue asparagine 176 coordinates Mn(2+). Residues 179 to 181 (IYR), 193 to 195 (RWL), and 198 to 199 (RG) contribute to the prenylated FMN site. Position 242 (glutamate 242) interacts with Mn(2+). Aspartate 303 serves as the catalytic Proton donor.

It belongs to the UbiD family. As to quaternary structure, homohexamer. Requires prenylated FMN as cofactor. Mn(2+) serves as cofactor.

The protein resides in the cell membrane. It catalyses the reaction a 4-hydroxy-3-(all-trans-polyprenyl)benzoate + H(+) = a 2-(all-trans-polyprenyl)phenol + CO2. The protein operates within cofactor biosynthesis; ubiquinone biosynthesis. Catalyzes the decarboxylation of 3-octaprenyl-4-hydroxy benzoate to 2-octaprenylphenol, an intermediate step in ubiquinone biosynthesis. This is 3-octaprenyl-4-hydroxybenzoate carboxy-lyase from Ralstonia nicotianae (strain ATCC BAA-1114 / GMI1000) (Ralstonia solanacearum).